A 65-amino-acid chain; its full sequence is Large ribosomal subunit protein bL32 (65 aa).

A disordered region spans residues 1-45 (MAVQQNKKTPSKRGMRRAHDVLKKPTFSVDFSSGETHRRHHVTPD).

This sequence belongs to the bacterial ribosomal protein bL32 family.

This Nitrosococcus oceani (strain ATCC 19707 / BCRC 17464 / JCM 30415 / NCIMB 11848 / C-107) protein is Large ribosomal subunit protein bL32.